A 526-amino-acid polypeptide reads, in one-letter code: Peptide chain release factor 3 (526 aa).

The tr-type G domain occupies Glu-9–Gln-277. GTP-binding positions include Ser-18–Thr-25, Asp-86–His-90, and Asn-140–Asp-143.

This sequence belongs to the TRAFAC class translation factor GTPase superfamily. Classic translation factor GTPase family. PrfC subfamily.

Its subcellular location is the cytoplasm. Functionally, increases the formation of ribosomal termination complexes and stimulates activities of RF-1 and RF-2. It binds guanine nucleotides and has strong preference for UGA stop codons. It may interact directly with the ribosome. The stimulation of RF-1 and RF-2 is significantly reduced by GTP and GDP, but not by GMP. This Methylococcus capsulatus (strain ATCC 33009 / NCIMB 11132 / Bath) protein is Peptide chain release factor 3.